A 251-amino-acid polypeptide reads, in one-letter code: Coenzyme F420:L-glutamate ligase (251 aa).

GTP contacts are provided by residues 9 to 12 (LPEI), 38 to 39 (ST), and K43. D113 contributes to the a divalent metal cation binding site. N116 serves as a coordination point for GTP. Residues D149, T150, and E207 each coordinate a divalent metal cation. 205–212 (AGEGDGGT) lines the GTP pocket.

It belongs to the CofE family. Homodimer. Requires Mg(2+) as cofactor. Mn(2+) is required as a cofactor. The cofactor is K(+).

It carries out the reaction oxidized coenzyme F420-0 + GTP + L-glutamate = oxidized coenzyme F420-1 + GDP + phosphate + H(+). The enzyme catalyses oxidized coenzyme F420-1 + GTP + L-glutamate = oxidized coenzyme F420-2 + GDP + phosphate + H(+). It participates in cofactor biosynthesis; coenzyme F420 biosynthesis. Functionally, catalyzes the GTP-dependent successive addition of two or more gamma-linked L-glutamates to the L-lactyl phosphodiester of 7,8-didemethyl-8-hydroxy-5-deazariboflavin (F420-0) to form coenzyme F420-0-glutamyl-glutamate (F420-2) or polyglutamated F420 derivatives. This Halorubrum lacusprofundi (strain ATCC 49239 / DSM 5036 / JCM 8891 / ACAM 34) protein is Coenzyme F420:L-glutamate ligase.